Reading from the N-terminus, the 156-residue chain is Ribosomal RNA large subunit methyltransferase H (156 aa).

S-adenosyl-L-methionine is bound by residues Leu-73, Gly-104, and Leu-123–Leu-128.

This sequence belongs to the RNA methyltransferase RlmH family. In terms of assembly, homodimer.

The protein resides in the cytoplasm. It carries out the reaction pseudouridine(1915) in 23S rRNA + S-adenosyl-L-methionine = N(3)-methylpseudouridine(1915) in 23S rRNA + S-adenosyl-L-homocysteine + H(+). Specifically methylates the pseudouridine at position 1915 (m3Psi1915) in 23S rRNA. This is Ribosomal RNA large subunit methyltransferase H from Hahella chejuensis (strain KCTC 2396).